A 158-amino-acid chain; its full sequence is Toxin Tse2 (158 aa).

In terms of assembly, forms a heterotetramer with Tsi2 consisting of two Tse2 dimers and two Tsi2 dimers. Formation of the complex inactivates Tse2 enzymatic activity.

It is found in the secreted. Toxin secreted by the H1 type VI (H1-T6SS) secretion system into the cytoplasm of recipient cells. Acts likely as a NAD-dependent cytotoxin towards both prokaryotic and eukaryotic cells. This Pseudomonas aeruginosa (strain ATCC 15692 / DSM 22644 / CIP 104116 / JCM 14847 / LMG 12228 / 1C / PRS 101 / PAO1) protein is Toxin Tse2.